Here is a 588-residue protein sequence, read N- to C-terminus: Solute carrier family 2, facilitated glucose transporter member 12 (588 aa).

Over Met-1–Thr-28 the chain is Cytoplasmic. A helical membrane pass occupies residues Gly-29–Gly-49. Over Tyr-50–Glu-74 the chain is Extracellular. A helical transmembrane segment spans residues Ile-75–Ile-95. Topologically, residues Asp-96 to Thr-103 are cytoplasmic. The helical transmembrane segment at Ile-104 to Tyr-124 threads the bilayer. The Extracellular segment spans residues Gly-125–Arg-131. Residues Ile-132–Leu-152 traverse the membrane as a helical segment. Over Ser-153–Arg-158 the chain is Cytoplasmic. A helical membrane pass occupies residues Gly-159–Cys-179. Topologically, residues Asn-180 to Lys-191 are extracellular. Residues Tyr-192 to Pro-212 form a helical membrane-spanning segment. Residues Arg-213 to Arg-272 are Cytoplasmic-facing. Residues Leu-273–Phe-293 form a helical membrane-spanning segment. At Tyr-294–Ser-311 the chain is on the extracellular side. The helical transmembrane segment at Leu-312 to Val-332 threads the bilayer. At Asp-333–Thr-339 the chain is on the cytoplasmic side. Residues Phe-340 to Leu-360 form a helical membrane-spanning segment. The Extracellular segment spans residues Gln-361–Leu-459. Asn-377, Asn-395, and Asn-419 each carry an N-linked (GlcNAc...) asparagine glycan. A helical membrane pass occupies residues Ser-460–Val-480. Residues Gln-481 to Arg-492 are Cytoplasmic-facing. Residues Ala-493–Leu-513 traverse the membrane as a helical segment. Topologically, residues Thr-514–Pro-522 are extracellular. A helical membrane pass occupies residues Trp-523–Val-543. Over Pro-544 to Ala-588 the chain is Cytoplasmic.

This sequence belongs to the major facilitator superfamily. Sugar transporter (TC 2.A.1.1) family. Glucose transporter subfamily.

Its subcellular location is the cell membrane. The protein resides in the endomembrane system. It is found in the cytoplasm. It localises to the perinuclear region. It carries out the reaction D-glucose(out) = D-glucose(in). Its function is as follows. Insulin-regulated facilitative glucose transporter. The polypeptide is Solute carrier family 2, facilitated glucose transporter member 12 (Xenopus laevis (African clawed frog)).